The following is a 272-amino-acid chain: Orotidine 5'-phosphate decarboxylase (272 aa).

Residue Lys-96 is the Proton donor of the active site.

It belongs to the OMP decarboxylase family. Type 2 subfamily.

The enzyme catalyses orotidine 5'-phosphate + H(+) = UMP + CO2. It functions in the pathway pyrimidine metabolism; UMP biosynthesis via de novo pathway; UMP from orotate: step 2/2. In Christiangramia forsetii (strain DSM 17595 / CGMCC 1.15422 / KT0803) (Gramella forsetii), this protein is Orotidine 5'-phosphate decarboxylase.